A 508-amino-acid polypeptide reads, in one-letter code: Photosystem II CP47 reaction center protein (508 aa).

The next 6 membrane-spanning stretches (helical) occupy residues 21 to 36, 101 to 115, 140 to 156, 203 to 218, 237 to 252, and 457 to 472; these read SVHI…WAGS, IVFS…IWHW, GIHL…FGAF, IAAG…FHLS, VLSS…AFVV, and SFAL…HGSR.

It belongs to the PsbB/PsbC family. PsbB subfamily. PSII is composed of 1 copy each of membrane proteins PsbA, PsbB, PsbC, PsbD, PsbE, PsbF, PsbH, PsbI, PsbJ, PsbK, PsbL, PsbM, PsbT, PsbX, PsbY, PsbZ, Psb30/Ycf12, at least 3 peripheral proteins of the oxygen-evolving complex and a large number of cofactors. It forms dimeric complexes. Requires Binds multiple chlorophylls. PSII binds additional chlorophylls, carotenoids and specific lipids. as cofactor.

The protein resides in the plastid. It is found in the chloroplast thylakoid membrane. One of the components of the core complex of photosystem II (PSII). It binds chlorophyll and helps catalyze the primary light-induced photochemical processes of PSII. PSII is a light-driven water:plastoquinone oxidoreductase, using light energy to abstract electrons from H(2)O, generating O(2) and a proton gradient subsequently used for ATP formation. The sequence is that of Photosystem II CP47 reaction center protein from Capsella bursa-pastoris (Shepherd's purse).